The primary structure comprises 436 residues: GTPase Obg (436 aa).

The 159-residue stretch at 2–160 (SMFLDTAKVS…RELALELKIL (159 aa)) folds into the Obg domain. The OBG-type G domain maps to 161 to 338 (ADVGLVGFPS…LLDATAQLLA (178 aa)). Residues 167-174 (GFPSVGKS), 192-196 (FTTIV), 214-217 (DLPG), 284-287 (NKMD), and 319-321 (SGI) contribute to the GTP site. Residues serine 174 and threonine 194 each coordinate Mg(2+). Residues 358 to 436 (GFEEEEKAFD…IGKFEFEFVD (79 aa)) form the OCT domain.

This sequence belongs to the TRAFAC class OBG-HflX-like GTPase superfamily. OBG GTPase family. Monomer. It depends on Mg(2+) as a cofactor.

The protein localises to the cytoplasm. An essential GTPase which binds GTP, GDP and possibly (p)ppGpp with moderate affinity, with high nucleotide exchange rates and a fairly low GTP hydrolysis rate. Plays a role in control of the cell cycle, stress response, ribosome biogenesis and in those bacteria that undergo differentiation, in morphogenesis control. This is GTPase Obg from Streptococcus mutans serotype c (strain ATCC 700610 / UA159).